A 542-amino-acid polypeptide reads, in one-letter code: CTP synthase (542 aa).

Residues 1 to 265 form an amidoligase domain region; the sequence is MTRYVFITGG…DREILAHFQM (265 aa). Ser-13 is a CTP binding site. UTP is bound at residue Ser-13. ATP is bound by residues 14 to 19 and Asp-71; that span reads SLGKGL. 2 residues coordinate Mg(2+): Asp-71 and Glu-139. Residues 146 to 148, 186 to 191, and Lys-222 each bind CTP; these read DIE and KTKPTQ. UTP-binding positions include 186-191 and Lys-222; that span reads KTKPTQ. 238-240 contacts ATP; the sequence is RDV. Residues 291–541 enclose the Glutamine amidotransferase type-1 domain; that stretch reads TIAIVGKYTG…IAAAIDQSRL (251 aa). Gly-353 lines the L-glutamine pocket. Cys-380 acts as the Nucleophile; for glutamine hydrolysis in catalysis. L-glutamine contacts are provided by residues 381–384, Glu-404, and Arg-469; that span reads FGMQ. Catalysis depends on residues His-514 and Glu-516.

Belongs to the CTP synthase family. As to quaternary structure, homotetramer.

The catalysed reaction is UTP + L-glutamine + ATP + H2O = CTP + L-glutamate + ADP + phosphate + 2 H(+). It carries out the reaction L-glutamine + H2O = L-glutamate + NH4(+). The enzyme catalyses UTP + NH4(+) + ATP = CTP + ADP + phosphate + 2 H(+). It participates in pyrimidine metabolism; CTP biosynthesis via de novo pathway; CTP from UDP: step 2/2. Allosterically activated by GTP, when glutamine is the substrate; GTP has no effect on the reaction when ammonia is the substrate. The allosteric effector GTP functions by stabilizing the protein conformation that binds the tetrahedral intermediate(s) formed during glutamine hydrolysis. Inhibited by the product CTP, via allosteric rather than competitive inhibition. Its function is as follows. Catalyzes the ATP-dependent amination of UTP to CTP with either L-glutamine or ammonia as the source of nitrogen. Regulates intracellular CTP levels through interactions with the four ribonucleotide triphosphates. This chain is CTP synthase, found in Methylorubrum extorquens (strain CM4 / NCIMB 13688) (Methylobacterium extorquens).